The chain runs to 508 residues: Histidine ammonia-lyase (508 aa).

The 5-imidazolinone (Ala-Gly) cross-link spans 143-145; sequence ASG. Ser144 is subject to 2,3-didehydroalanine (Ser).

It belongs to the PAL/histidase family. Contains an active site 4-methylidene-imidazol-5-one (MIO), which is formed autocatalytically by cyclization and dehydration of residues Ala-Ser-Gly.

Its subcellular location is the cytoplasm. It carries out the reaction L-histidine = trans-urocanate + NH4(+). It participates in amino-acid degradation; L-histidine degradation into L-glutamate; N-formimidoyl-L-glutamate from L-histidine: step 1/3. The polypeptide is Histidine ammonia-lyase (Anaeromyxobacter dehalogenans (strain 2CP-C)).